The primary structure comprises 228 residues: Max-interacting protein 1 (228 aa).

Disordered stretches follow at residues Y30 to E76 and S160 to S228. Residues Q43–K56 show a composition bias toward basic residues. Residues H57–S70 show a composition bias toward polar residues. In terms of domain architecture, bHLH spans A67 to L119. Positions E173 to S183 are enriched in acidic residues. Residues S207–S228 show a composition bias toward polar residues.

As to quaternary structure, efficient DNA binding requires dimerization with another bHLH protein. Binds DNA as a heterodimer with MAX. Interacts with SMC3. Interacts with RNF17.

It localises to the nucleus. In terms of biological role, transcriptional repressor. MXI1 binds with MAX to form a sequence-specific DNA-binding protein complex which recognizes the core sequence 5'-CAC[GA]TG-3'. MXI1 thus antagonizes MYC transcriptional activity by competing for MAX. Isoform Short, which lacks a segment, has a much stronger suppressive potential and associates with a SIN3 homologous protein. This Mus musculus (Mouse) protein is Max-interacting protein 1 (Mxi1).